Reading from the N-terminus, the 309-residue chain is Ribonuclease Z (309 aa).

Zn(2+) contacts are provided by H63, H65, D67, H68, H145, D216, and H274. D67 serves as the catalytic Proton acceptor.

The protein belongs to the RNase Z family. In terms of assembly, homodimer. The cofactor is Zn(2+).

It carries out the reaction Endonucleolytic cleavage of RNA, removing extra 3' nucleotides from tRNA precursor, generating 3' termini of tRNAs. A 3'-hydroxy group is left at the tRNA terminus and a 5'-phosphoryl group is left at the trailer molecule.. Zinc phosphodiesterase, which displays some tRNA 3'-processing endonuclease activity. Probably involved in tRNA maturation, by removing a 3'-trailer from precursor tRNA. This is Ribonuclease Z from Streptococcus pyogenes serotype M1.